The following is a 66-amino-acid chain: MKPNIHPDYGPARIICACGNVIETRSTKKDIRVEICSQCHPFYTGSRQRVVERGGRIERFRQKYGR.

Residues cysteine 16, cysteine 18, cysteine 36, and cysteine 39 each contribute to the Zn(2+) site.

The protein belongs to the bacterial ribosomal protein bL31 family. Type A subfamily. As to quaternary structure, part of the 50S ribosomal subunit. Zn(2+) serves as cofactor.

Functionally, binds the 23S rRNA. The protein is Large ribosomal subunit protein bL31 of Moorella thermoacetica (strain ATCC 39073 / JCM 9320).